We begin with the raw amino-acid sequence, 254 residues long: Low affinity immunoglobulin gamma Fc region receptor III-A (254 aa).

Positions 1-20 are cleaved as a signal peptide; that stretch reads MWQLLLPTALLLLVSAGMRA. Topologically, residues 21–206 are extracellular; sequence EDLPKAVVFL…SSISSFFPPG (186 aa). Ig-like C2-type domains lie at 24-105 and 107-189; these read PKAV…LEVH and GWLL…VNIT. 2 disulfides stabilise this stretch: Cys47-Cys89 and Cys128-Cys172. Asn187 carries N-linked (GlcNAc...) asparagine glycosylation. The chain crosses the membrane as a helical span at residues 207 to 229; the sequence is YQVSFCLVMVLLFAVDTGLYFSV. Topologically, residues 230 to 254 are cytoplasmic; that stretch reads KKSVPSSTRDWEDHKFKWSKDPQDK.

Forms a heterooligomeric complex with ITAM-containing signaling subunits, either a homodimer of CD247, a homodimer of FCER1G or a heterodimer of CD247 and FCER1G, to form a functional receptor complex. Interacts (via transmembrane domain) with signaling subunits; this interaction is a prerequisite for receptor complex expression on the cell surface and intracellular signal transduction. Binds the Fc region of antigen-complexed IgG with a preference for IgG1 and IgG3 isotypes. Interacts with CD2; this interaction is involved in NK cell activation and cytotoxicity. Interacts with S100A4; this interaction inhibits PKC-dependent phosphorylation of FCGR3A. Post-translationally, glycosylated. Glycosylation plays an inhibitory role in the interaction with IgG1 and IgG2. In terms of processing, undergoes rapid ectodomain shedding upon NK cell stimulation. The soluble form is produced by a proteolytic cleavage mediated by ADAM17. Repeated stimulation causes receptor shedding, a mechanism that allows for increased NK cell motility and detachment from opsonized target cells while avoiding activation-induced NK cell apoptosis. Lymphocytes and monocytes.

The protein resides in the cell membrane. It localises to the secreted. Receptor for the invariable Fc fragment of immunoglobulin gamma (IgG). Optimally activated upon binding of clustered antigen-IgG complexes displayed on cell surfaces, triggers lysis of antibody-coated cells, a process known as antibody-dependent cellular cytotoxicity (ADCC). Does not bind free monomeric IgG, thus avoiding inappropriate effector cell activation in the absence of antigenic trigger. Mediates IgG effector functions on natural killer (NK) cells. Binds antigen-IgG complexes generated upon infection and triggers NK cell-dependent cytokine production and degranulation to limit viral load and propagation. Involved in the generation of memory-like adaptive NK cells capable to produce high amounts of IFNG and to efficiently eliminate virus-infected cells via ADCC. Regulates NK cell survival and proliferation, in particular by preventing NK cell progenitor apoptosis. Fc-binding subunit that associates with CD247 and/or FCER1G adapters to form functional signaling complexes. Following the engagement of antigen-IgG complexes, triggers phosphorylation of immunoreceptor tyrosine-based activation motif (ITAM)-containing adapters with subsequent activation of phosphatidylinositol 3-kinase signaling and sustained elevation of intracellular calcium that ultimately drive NK cell activation. The ITAM-dependent signaling coupled to receptor phosphorylation by PKC mediates robust intracellular calcium flux that leads to production of pro-inflammatory cytokines, whereas in the absence of receptor phosphorylation it mainly activates phosphatidylinositol 3-kinase signaling leading to cell degranulation. Costimulates NK cells and trigger lysis of target cells independently of IgG binding. Mediates the antitumor activities of therapeutic antibodies. Upon ligation on monocytes triggers TNFA-dependent ADCC of IgG-coated tumor cells. Mediates enhanced ADCC in response to afucosylated IgGs. This chain is Low affinity immunoglobulin gamma Fc region receptor III-A, found in Macaca mulatta (Rhesus macaque).